The sequence spans 341 residues: Enduracididine beta-hydroxylase (341 aa).

The Fe cation site is built by histidine 146 and glutamate 148. A disordered region spans residues histidine 203–arginine 223. Position 300 (histidine 300) interacts with Fe cation.

The protein belongs to the clavaminate synthase family. It depends on Fe(2+) as a cofactor.

It catalyses the reaction L-enduracididine + 2-oxoglutarate + O2 = (3S)-3-hydroxy-L-enduracididine + succinate + CO2. It participates in antibiotic biosynthesis. In terms of biological role, hydroxylates the beta carbon of free L-enduracididine to produce (3S)-3-hydroxy-L-enduracididine in biosynthesis of the nonproteinogenic amino acid beta-hydroxyenduracididine, a component of antibiotic mannopeptimycin. This chain is Enduracididine beta-hydroxylase (mppO), found in Streptomyces hygroscopicus.